Here is a 238-residue protein sequence, read N- to C-terminus: 1-(5-phosphoribosyl)-5-[(5-phosphoribosylamino)methylideneamino] imidazole-4-carboxamide isomerase (238 aa).

Asp-8 acts as the Proton acceptor in catalysis. Asp-129 acts as the Proton donor in catalysis.

This sequence belongs to the HisA/HisF family.

It localises to the cytoplasm. The catalysed reaction is 1-(5-phospho-beta-D-ribosyl)-5-[(5-phospho-beta-D-ribosylamino)methylideneamino]imidazole-4-carboxamide = 5-[(5-phospho-1-deoxy-D-ribulos-1-ylimino)methylamino]-1-(5-phospho-beta-D-ribosyl)imidazole-4-carboxamide. The protein operates within amino-acid biosynthesis; L-histidine biosynthesis; L-histidine from 5-phospho-alpha-D-ribose 1-diphosphate: step 4/9. This is 1-(5-phosphoribosyl)-5-[(5-phosphoribosylamino)methylideneamino] imidazole-4-carboxamide isomerase from Lacticaseibacillus paracasei (strain ATCC 334 / BCRC 17002 / CCUG 31169 / CIP 107868 / KCTC 3260 / NRRL B-441) (Lactobacillus paracasei).